The chain runs to 132 residues: Small ribosomal subunit protein uS9 (132 aa).

Belongs to the universal ribosomal protein uS9 family.

This chain is Small ribosomal subunit protein uS9, found in Leptospira borgpetersenii serovar Hardjo-bovis (strain JB197).